A 625-amino-acid polypeptide reads, in one-letter code: Protein arginine N-methyltransferase skb1 (625 aa).

The 309-residue stretch at 280-588 (LQVPLQPLSY…WRLTDGMRVW (309 aa)) folds into the SAM-dependent MTase PRMT-type domain. Residues Y296, 305-306 (KY), E359, and 386-387 (DM) contribute to the S-adenosyl-L-methionine site. Active-site proton donor/acceptor residues include E402 and E411.

The protein belongs to the class I-like SAM-binding methyltransferase superfamily. Protein arginine N-methyltransferase family. Interacts with the N-terminal regulatory domain of shk1. Shk1, cdc42 and skb1 are able to form a ternary complex in vivo. Interacts with orb6. Interacts with Cdr1 and the Cdr1 inhibitory target Wee1.

The protein resides in the nucleus. The protein localises to the cell tip. It localises to the cell septum. It is found in the cytoplasm. Its subcellular location is the cell cortex. S-adenosyl-L-methionine-dependent protein-arginine N-methyltransferase that can catalyze both the mono- and symmetric (type II) dimethylation of the guanidino nitrogens of arginine residues in target proteins. Delays mitotic entry by inhibiting the Cdr1-Wee1 signaling pathway. Cortical nodes sequester Skb1 from its regulatory targets Cdr1 and Wee1. Positively modulates the shk1 kinase function. May be a mediator of hyperosmotic stress response. Involved in the control of cell polarity by regulating the subcellular localization of Orb6 kinase. The sequence is that of Protein arginine N-methyltransferase skb1 from Schizosaccharomyces pombe (strain 972 / ATCC 24843) (Fission yeast).